The chain runs to 82 residues: UPF0437 protein in nifX-nifW intergenic region (82 aa).

Belongs to the UPF0437 family.

In Frankia alni, this protein is UPF0437 protein in nifX-nifW intergenic region.